The primary structure comprises 467 residues: DEAD-box ATP-dependent RNA helicase CshA (467 aa).

Positions 2–30 match the Q motif motif; the sequence is TTFQELGLSQEVMKAIERMGFEETTPIQA. In terms of domain architecture, Helicase ATP-binding spans 33 to 203; that stretch reads IPLSLQNKDV…ERFMNEPELV (171 aa). 46-53 is a binding site for ATP; that stretch reads AQTGTGKT. The DEAD box motif lies at 151-154; the sequence is DEAD. The Helicase C-terminal domain maps to 214 to 374; sequence NIQQYYLEVH…RMKPPTLDEA (161 aa). The tract at residues 428-467 is disordered; sequence TTPVQLTEEPPLAVKREKKRGGRPDGSARSRTKKRRITAH. Residues 457–467 show a composition bias toward basic residues; that stretch reads SRTKKRRITAH.

Belongs to the DEAD box helicase family. CshA subfamily. Oligomerizes, may be a member of the RNA degradosome.

Its subcellular location is the cytoplasm. It catalyses the reaction ATP + H2O = ADP + phosphate + H(+). Functionally, DEAD-box RNA helicase possibly involved in RNA degradation. Unwinds dsRNA in both 5'- and 3'-directions, has RNA-dependent ATPase activity. In Geobacillus kaustophilus (strain HTA426), this protein is DEAD-box ATP-dependent RNA helicase CshA.